The primary structure comprises 406 residues: Angiopoietin-related protein 4 (406 aa).

The signal sequence occupies residues 1-25; the sequence is MSGAPTAGAALMLCAATAVLLSAQG. Positions 100–143 form a coiled coil; that stretch reads EVLHSLQTQLKAQNSRIQQLFHKVAQQQRHLEKQHLRIQHLQSQ. An N-linked (GlcNAc...) asparagine glycan is attached at Asn-177. In terms of domain architecture, Fibrinogen C-terminal spans 179–401; the sequence is SRLHRLPRDC…ATTMLIQPMA (223 aa). 2 disulfide bridges follow: Cys-188/Cys-216 and Cys-341/Cys-354.

Homooligomer; disulfide-linked via Cys residues in the N-terminal part of the protein. The homooligomer undergoes proteolytic processing to release the ANGPTL4 C-terminal chain, which circulates as a monomer. The homooligomer unprocessed form is able to interact with the extracellular matrix. Post-translationally, N-glycosylated. Forms disulfide-linked dimers and tetramers. In terms of processing, cleaved into a smaller N-terminal chain and a larger chain that contains the fibrinogen C-terminal domain; both cleaved and uncleaved forms are detected in the extracellular space. The cleaved form is not present within the cell. As to expression, detected in blood plasma (at protein level). Detected in liver. Detected in white fat tissue and placenta. Expressed at high levels in the placenta, heart, liver, muscle, pancreas and lung but expressed poorly in the brain and kidney.

The protein resides in the secreted. It localises to the extracellular space. The protein localises to the extracellular matrix. Its function is as follows. Mediates inactivation of the lipoprotein lipase LPL, and thereby plays a role in the regulation of triglyceride clearance from the blood serum and in lipid metabolism. May also play a role in regulating glucose homeostasis and insulin sensitivity. Inhibits proliferation, migration, and tubule formation of endothelial cells and reduces vascular leakage. Upon heterologous expression, inhibits the adhesion of endothelial cell to the extracellular matrix (ECM), and inhibits the reorganization of the actin cytoskeleton, formation of actin stress fibers and focal adhesions in endothelial cells that have adhered to ANGPTL4-containing ECM (in vitro). Depending on context, may modulate tumor-related angiogenesis. Mediates inactivation of the lipoprotein lipase LPL, and thereby plays an important role in the regulation of triglyceride clearance from the blood serum and in lipid metabolism. Has higher activity in LPL inactivation than the uncleaved protein. In Homo sapiens (Human), this protein is Angiopoietin-related protein 4 (ANGPTL4).